Reading from the N-terminus, the 224-residue chain is UPF0758 protein Nmul_A2138 (224 aa).

The region spanning 102 to 224 is the MPN domain; sequence AMDSPGPVRA…TLSFAEQGLI (123 aa). Zn(2+) contacts are provided by His173, His175, and Asp186. Positions 173 to 186 match the JAMM motif motif; the sequence is HNHPSGAAEPSHAD.

This sequence belongs to the UPF0758 family.

In Nitrosospira multiformis (strain ATCC 25196 / NCIMB 11849 / C 71), this protein is UPF0758 protein Nmul_A2138.